The following is a 128-amino-acid chain: uncharacterized protein (128 aa).

Disordered regions lie at residues 1–53 (MHLP…PKGR) and 85–105 (PDGP…SGPL).

This is an uncharacterized protein from Escherichia coli.